The following is a 207-amino-acid chain: dTTP/UTP pyrophosphatase (207 aa).

The Proton acceptor role is filled by Asp79.

Belongs to the Maf family. YhdE subfamily. A divalent metal cation is required as a cofactor.

It is found in the cytoplasm. It catalyses the reaction dTTP + H2O = dTMP + diphosphate + H(+). The enzyme catalyses UTP + H2O = UMP + diphosphate + H(+). Its function is as follows. Nucleoside triphosphate pyrophosphatase that hydrolyzes dTTP and UTP. May have a dual role in cell division arrest and in preventing the incorporation of modified nucleotides into cellular nucleic acids. In Rhodopseudomonas palustris (strain BisB18), this protein is dTTP/UTP pyrophosphatase.